Reading from the N-terminus, the 345-residue chain is Isopentenyl-diphosphate delta-isomerase (345 aa).

6–7 (RK) serves as a coordination point for substrate. FMN contacts are provided by residues 63–65 (SMT), serine 93, and asparagine 122. A substrate-binding site is contributed by 93-95 (SQR). Glutamine 156 serves as a coordination point for substrate. Glutamate 157 lines the Mg(2+) pocket. Residues lysine 188, threonine 218, 265–267 (GLR), and 286–287 (AL) contribute to the FMN site.

It belongs to the IPP isomerase type 2 family. Homooctamer. Dimer of tetramers. FMN is required as a cofactor. It depends on NADPH as a cofactor. Mg(2+) serves as cofactor.

It is found in the cytoplasm. It catalyses the reaction isopentenyl diphosphate = dimethylallyl diphosphate. Functionally, involved in the biosynthesis of isoprenoids. Catalyzes the 1,3-allylic rearrangement of the homoallylic substrate isopentenyl (IPP) to its allylic isomer, dimethylallyl diphosphate (DMAPP). The polypeptide is Isopentenyl-diphosphate delta-isomerase (Archaeoglobus fulgidus (strain ATCC 49558 / DSM 4304 / JCM 9628 / NBRC 100126 / VC-16)).